The sequence spans 650 residues: Acetyl-coenzyme A synthetase (650 aa).

Residues 191–194, T311, and N335 each bind CoA; that span reads RGGR. Residues 387–389, 411–416, D500, and R515 contribute to the ATP site; these read GEP and DTWWQT. Residue S523 coordinates CoA. ATP is bound at residue R526. The Mg(2+) site is built by V537, H539, and V542. Residue R584 participates in CoA binding. K609 carries the post-translational modification N6-acetyllysine.

It belongs to the ATP-dependent AMP-binding enzyme family. Requires Mg(2+) as cofactor. Acetylated. Deacetylation by the SIR2-homolog deacetylase activates the enzyme.

It carries out the reaction acetate + ATP + CoA = acetyl-CoA + AMP + diphosphate. Catalyzes the conversion of acetate into acetyl-CoA (AcCoA), an essential intermediate at the junction of anabolic and catabolic pathways. AcsA undergoes a two-step reaction. In the first half reaction, AcsA combines acetate with ATP to form acetyl-adenylate (AcAMP) intermediate. In the second half reaction, it can then transfer the acetyl group from AcAMP to the sulfhydryl group of CoA, forming the product AcCoA. This Shewanella amazonensis (strain ATCC BAA-1098 / SB2B) protein is Acetyl-coenzyme A synthetase.